A 316-amino-acid chain; its full sequence is Probable cell division protein WhiA (316 aa).

A DNA-binding region (H-T-H motif) is located at residues 275 to 309 (TLKELGEMVSGGKISKSGINHRLRKIDDIAEKLRA).

This sequence belongs to the WhiA family.

Involved in cell division and chromosome segregation. The protein is Probable cell division protein WhiA of Bacillus anthracis (strain CDC 684 / NRRL 3495).